The sequence spans 243 residues: Glutathione S-transferase U14 (243 aa).

Residues 5-87 (DTVKLIGCSD…YLDEAWPSDP (83 aa)) form the GST N-terminal domain. Residues 15 to 16 (DP), 44 to 45 (EK), 58 to 59 (KT), and 71 to 72 (ES) contribute to the glutathione site. Positions 93-220 (NAYDRASARF…MPTVEEVTEL (128 aa)) constitute a GST C-terminal domain. Residue threonine 159 is modified to Phosphothreonine.

It belongs to the GST superfamily. Tau family.

It is found in the cytoplasm. It localises to the cytosol. It catalyses the reaction RX + glutathione = an S-substituted glutathione + a halide anion + H(+). Its function is as follows. May be involved in the conjugation of reduced glutathione to a wide number of exogenous and endogenous hydrophobic electrophiles and have a detoxification role against certain herbicides. This is Glutathione S-transferase U14 (GSTU14) from Arabidopsis thaliana (Mouse-ear cress).